Consider the following 499-residue polypeptide: Cytochrome P450 710A2 (499 aa).

A helical membrane pass occupies residues 5–25 (VSIFASLAPYLVSALLLFFLI). Cysteine 439 is a binding site for heme.

Belongs to the cytochrome P450 family. It depends on heme as a cofactor. As to expression, expressed in the vascular tissues of roots, shoots, stems and leaves. Expressed in root tips, carpes, siliques and seeds.

Its subcellular location is the membrane. The catalysed reaction is 5-dehydroepisterol + NADPH + O2 + H(+) = ergosta-5,7,22,24(28)-tetraen-3beta-ol + NADP(+) + 2 H2O. It participates in steroid biosynthesis; sterol biosynthesis. Functionally, required to form the C-22 double bond in the sterol side chain. Possesses in vitro C-22 desaturase activity toward 24-epi-campesterol and beta-sitosterol and produces brassicasterol and stigmasterol, respectively. No activity with campesterol. The polypeptide is Cytochrome P450 710A2 (Arabidopsis thaliana (Mouse-ear cress)).